The primary structure comprises 890 residues: Leucine--tRNA ligase (890 aa).

Residues 48–58 carry the 'HIGH' region motif; it reads PYPSGKLHMGH. The 'KMSKS' region signature appears at 645-649; the sequence is KMSKS. Position 648 (Lys648) interacts with ATP.

Belongs to the class-I aminoacyl-tRNA synthetase family.

It is found in the cytoplasm. The catalysed reaction is tRNA(Leu) + L-leucine + ATP = L-leucyl-tRNA(Leu) + AMP + diphosphate. This is Leucine--tRNA ligase from Polynucleobacter asymbioticus (strain DSM 18221 / CIP 109841 / QLW-P1DMWA-1) (Polynucleobacter necessarius subsp. asymbioticus).